The sequence spans 128 residues: Small ribosomal subunit protein uS12 (128 aa).

Residues 1-25 (MPTIQQLIRRGRKTKASKTASPALE) form a disordered region. A 3-methylthioaspartic acid modification is found at aspartate 89. Positions 101 to 128 (SLDTSGVADRRNSRSKYGAKRPKEAAAK) are disordered.

This sequence belongs to the universal ribosomal protein uS12 family. In terms of assembly, part of the 30S ribosomal subunit. Contacts proteins S8 and S17. May interact with IF1 in the 30S initiation complex.

In terms of biological role, with S4 and S5 plays an important role in translational accuracy. Its function is as follows. Interacts with and stabilizes bases of the 16S rRNA that are involved in tRNA selection in the A site and with the mRNA backbone. Located at the interface of the 30S and 50S subunits, it traverses the body of the 30S subunit contacting proteins on the other side and probably holding the rRNA structure together. The combined cluster of proteins S8, S12 and S17 appears to hold together the shoulder and platform of the 30S subunit. This chain is Small ribosomal subunit protein uS12, found in Chlorobium phaeobacteroides (strain BS1).